A 264-amino-acid chain; its full sequence is Interleukin-33 (264 aa).

Residues 1-67 are homeodomain-like HTH domain; that stretch reads MRPRMKYSNS…ETCYFGKEPA (67 aa). A propeptide spanning residues 1–101 is cleaved from the precursor; that stretch reads MRPRMKYSNS…RSLLGSIQAF (101 aa). Positions 66-108 are interaction with RELA; sequence PAKRYSLKSGSKHEGRLSTCLPDSRKRSLLGSIQAFAASVDTL.

The protein belongs to the IL-1 family. Highly divergent. Forms a 1:1:1 heterotrimeric complex with its primary high-affinity receptor IL1RL1 and the coreceptor IL1RAP. Interacts with cargo receptor TMED10; the interaction mediates the translocation from the cytoplasm into the ERGIC (endoplasmic reticulum-Golgi intermediate compartment) and thereby secretion. In terms of processing, the full-length protein can be released from cells and is able to signal via the IL1RL1/ST2 receptor. However, proteolytic processing by CELA1, CSTG/cathepsin G and ELANE/neutrophil elastase produces C-terminal peptides that are more active than the unprocessed full-length protein. May also be proteolytically processed by calpains. Proteolytic cleavage mediated by apoptotic caspases including CASP3 and CASP7 results in IL33 inactivation. In vitro proteolytic cleavage by CASP1 was reported but could not be confirmed in vivo suggesting that IL33 is probably not a direct substrate for that caspase.

The protein resides in the nucleus. The protein localises to the chromosome. Its subcellular location is the cytoplasm. It localises to the cytoplasmic vesicle. It is found in the secretory vesicle. The protein resides in the secreted. Its function is as follows. Cytokine that binds to and signals through the IL1RL1/ST2 receptor which in turn activates NF-kappa-B and MAPK signaling pathways in target cells. Involved in the maturation of Th2 cells inducing the secretion of T-helper type 2-associated cytokines. Also involved in activation of mast cells, basophils, eosinophils and natural killer cells. Acts as a chemoattractant for Th2 cells, and may function as an 'alarmin', that amplifies immune responses during tissue injury. Induces rapid UCP2-dependent mitochondrial rewiring that attenuates the generation of reactive oxygen species and preserves the integrity of Krebs cycle required for persistent production of itaconate and subsequent GATA3-dependent differentiation of inflammation-resolving alternatively activated macrophages. Functionally, in quiescent endothelia the uncleaved form is constitutively and abundantly expressed, and acts as a chromatin-associated nuclear factor with transcriptional repressor properties, it may sequester nuclear NF-kappaB/RELA, lowering expression of its targets. This form is rapidely lost upon angiogenic or pro-inflammatory activation. The chain is Interleukin-33 from Rattus norvegicus (Rat).